Reading from the N-terminus, the 344-residue chain is MALTPRIAIDAMGGDVGVRVMLAGAAMARHKHDGLRFILVGDEERIKAALDNHPNLRAASDIIHTDGVVSGEDKPSQALRKAKSTSMGLAIDAVKRGDAGGAVSAGNTGALMAMAKLALRTMPGIDRPALAALLPTLGDNDVVMLDLGANTECDATNLTQFAVMGAAYARTAMGLERPRVALLNIGTEELKGTDEIRDAAALLRGAEGLPMQFAGFIEGDKLSRGDVDVIVHDGFSGNIALKTIEGTARFVTDLLRRAFTSSTRSKIGFLISRPATELLRHHLDPNNHNGAVFLGLNGVVLKSHGSADAKGVANCVHLCAELIEKDITRQVTEDLANFRRGDAA.

This sequence belongs to the PlsX family. In terms of assembly, homodimer. Probably interacts with PlsY.

The protein resides in the cytoplasm. It catalyses the reaction a fatty acyl-[ACP] + phosphate = an acyl phosphate + holo-[ACP]. It functions in the pathway lipid metabolism; phospholipid metabolism. In terms of biological role, catalyzes the reversible formation of acyl-phosphate (acyl-PO(4)) from acyl-[acyl-carrier-protein] (acyl-ACP). This enzyme utilizes acyl-ACP as fatty acyl donor, but not acyl-CoA. This chain is Phosphate acyltransferase, found in Sphingopyxis alaskensis (strain DSM 13593 / LMG 18877 / RB2256) (Sphingomonas alaskensis).